A 427-amino-acid polypeptide reads, in one-letter code: 3-phosphoshikimate 1-carboxyvinyltransferase (427 aa).

Position 20 (Lys20) interacts with phosphoenolpyruvate. 2 residues coordinate 3-phosphoshikimate: Ser21 and Arg25. Phosphoenolpyruvate-binding residues include Gly92 and Arg120. Positions 166, 167, 168, 312, and 339 each coordinate 3-phosphoshikimate. A phosphoenolpyruvate-binding site is contributed by Gln168. Catalysis depends on Asp312, which acts as the Proton acceptor. Phosphoenolpyruvate-binding residues include Arg343 and Arg385.

In terms of assembly, homotetramer.

It is found in the cytoplasm. It catalyses the reaction 3-phosphoshikimate + phosphoenolpyruvate = 5-O-(1-carboxyvinyl)-3-phosphoshikimate + phosphate. The protein operates within metabolic intermediate biosynthesis; chorismate biosynthesis; chorismate from D-erythrose 4-phosphate and phosphoenolpyruvate: step 6/7. With respect to regulation, competitively inhibited by glyphosate. Activated by ammonium, rubidium or potassium ions. Functionally, catalyzes the transfer of the enolpyruvyl moiety of phosphoenolpyruvate (PEP) to the 5-hydroxyl of shikimate-3-phosphate (S3P) to produce enolpyruvyl shikimate-3-phosphate and inorganic phosphate. The chain is 3-phosphoshikimate 1-carboxyvinyltransferase from Streptococcus pneumoniae serotype 4 (strain ATCC BAA-334 / TIGR4).